The primary structure comprises 398 residues: Succinate--CoA ligase [ADP-forming] subunit beta (398 aa).

Positions 9–254 (KAVLREFGVP…ETEEDAKEIE (246 aa)) constitute an ATP-grasp domain. Residues K46, 53–55 (GRG), E109, S112, and E117 each bind ATP. The Mg(2+) site is built by N209 and D223. Substrate-binding positions include N274 and 331–333 (GIM).

The protein belongs to the succinate/malate CoA ligase beta subunit family. As to quaternary structure, heterotetramer of two alpha and two beta subunits. Mg(2+) is required as a cofactor.

The enzyme catalyses succinate + ATP + CoA = succinyl-CoA + ADP + phosphate. It carries out the reaction GTP + succinate + CoA = succinyl-CoA + GDP + phosphate. It functions in the pathway carbohydrate metabolism; tricarboxylic acid cycle; succinate from succinyl-CoA (ligase route): step 1/1. Succinyl-CoA synthetase functions in the citric acid cycle (TCA), coupling the hydrolysis of succinyl-CoA to the synthesis of either ATP or GTP and thus represents the only step of substrate-level phosphorylation in the TCA. The beta subunit provides nucleotide specificity of the enzyme and binds the substrate succinate, while the binding sites for coenzyme A and phosphate are found in the alpha subunit. The sequence is that of Succinate--CoA ligase [ADP-forming] subunit beta from Rhodopseudomonas palustris (strain ATCC BAA-98 / CGA009).